The sequence spans 39 residues: Omega-theraphotoxin-Ba1a (39 aa).

3 disulfide bridges follow: Cys4–Cys25, Cys8–Cys31, and Cys17–Cys36.

The protein belongs to the neurotoxin 12 (Hwtx-2) family. 06 (TXP1) subfamily. As to expression, expressed by the venom gland.

It localises to the secreted. Inhibits voltage-gated calcium channels (Cav) in rat cerebellar granule cells. Has insecticidal activity to crickets (Acheta domesticus). Is not toxic to mice. The protein is Omega-theraphotoxin-Ba1a of Brachypelma albiceps (Mexican golden redrump tarantula).